A 466-amino-acid chain; its full sequence is Ribulose bisphosphate carboxylase large chain (466 aa).

Lys-5 bears the N6,N6,N6-trimethyllysine mark. Asn-114 and Thr-164 together coordinate substrate. Lys-166 acts as the Proton acceptor in catalysis. Substrate is bound at residue Lys-168. Positions 192, 194, and 195 each coordinate Mg(2+). An N6-carboxylysine modification is found at Lys-192. The Proton acceptor role is filled by His-285. The substrate site is built by Arg-286, His-318, and Ser-370.

Belongs to the RuBisCO large chain family. Type I subfamily. As to quaternary structure, heterohexadecamer of 8 large chains and 8 small chains; disulfide-linked. The disulfide link is formed within the large subunit homodimers. Mg(2+) serves as cofactor. In terms of processing, the disulfide bond which can form in the large chain dimeric partners within the hexadecamer appears to be associated with oxidative stress and protein turnover.

The protein resides in the plastid. Its subcellular location is the chloroplast. The enzyme catalyses 2 (2R)-3-phosphoglycerate + 2 H(+) = D-ribulose 1,5-bisphosphate + CO2 + H2O. It catalyses the reaction D-ribulose 1,5-bisphosphate + O2 = 2-phosphoglycolate + (2R)-3-phosphoglycerate + 2 H(+). RuBisCO catalyzes two reactions: the carboxylation of D-ribulose 1,5-bisphosphate, the primary event in carbon dioxide fixation, as well as the oxidative fragmentation of the pentose substrate in the photorespiration process. Both reactions occur simultaneously and in competition at the same active site. The chain is Ribulose bisphosphate carboxylase large chain from Coriaria myrtifolia (Tanner's sumac).